Here is a 329-residue protein sequence, read N- to C-terminus: Cytosolic arginine sensor for mTORC1 subunit 2 (329 aa).

ACT domains follow at residues 72–139 (ADAT…MHTL) and 262–322 (ELWK…NALQ).

Belongs to the GATS family. In terms of assembly, may form homodimers and heterodimers.

Its subcellular location is the cytoplasm. It localises to the cytosol. Functionally, functions as a negative regulator of the TORC1 signaling pathway. In Xenopus laevis (African clawed frog), this protein is Cytosolic arginine sensor for mTORC1 subunit 2.